A 538-amino-acid chain; its full sequence is Phosphoenolpyruvate carboxykinase (ATP) (538 aa).

3 residues coordinate substrate: arginine 61, tyrosine 195, and lysine 201. Residues lysine 201, histidine 220, and 236–244 (GLSGTGKTT) contribute to the ATP site. Lysine 201 and histidine 220 together coordinate Mn(2+). Aspartate 257 lines the Mn(2+) pocket. Residues glutamate 285, arginine 323, and threonine 449 each contribute to the ATP site. Position 323 (arginine 323) interacts with substrate.

It belongs to the phosphoenolpyruvate carboxykinase (ATP) family. Mn(2+) is required as a cofactor.

Its subcellular location is the cytoplasm. The enzyme catalyses oxaloacetate + ATP = phosphoenolpyruvate + ADP + CO2. It participates in carbohydrate biosynthesis; gluconeogenesis. Involved in the gluconeogenesis. Catalyzes the conversion of oxaloacetate (OAA) to phosphoenolpyruvate (PEP) through direct phosphoryl transfer between the nucleoside triphosphate and OAA. In Nitrobacter hamburgensis (strain DSM 10229 / NCIMB 13809 / X14), this protein is Phosphoenolpyruvate carboxykinase (ATP).